The sequence spans 516 residues: Maturase K (516 aa).

The protein belongs to the intron maturase 2 family. MatK subfamily.

It localises to the plastid. The protein resides in the chloroplast. In terms of biological role, usually encoded in the trnK tRNA gene intron. Probably assists in splicing its own and other chloroplast group II introns. The sequence is that of Maturase K from Cypripedium calceolus (Yellow lady's slipper).